We begin with the raw amino-acid sequence, 84 residues long: Large ribosomal subunit protein bL27 (84 aa).

The tract at residues 1–21 (MAHKKGGGSSKNGRDSQSKRL) is disordered.

Belongs to the bacterial ribosomal protein bL27 family.

This chain is Large ribosomal subunit protein bL27, found in Brachyspira hyodysenteriae (strain ATCC 49526 / WA1).